A 226-amino-acid polypeptide reads, in one-letter code: MAKLSKKMKIAVGLVDKTKLYPLQEAVDLVKKTSITKFNGSVDIAVSLNLDTTKAEQQLRGAIAFPHSVGKPIRILAITDDEKAALEAGADFVGGIDKINDIKNGWLDFDLIITSPKFMAALGKLGKLLGTKGLMPNPKTETVTDDVPAAVRAYKKGKKEYRADSFGNIHMSLGRVDSASNHLVENALALLDLIKSRKPATVKGIYIKNIALTTTMGPSLKVKLPD.

The protein belongs to the universal ribosomal protein uL1 family. Part of the 50S ribosomal subunit.

Binds directly to 23S rRNA. The L1 stalk is quite mobile in the ribosome, and is involved in E site tRNA release. Functionally, protein L1 is also a translational repressor protein, it controls the translation of the L11 operon by binding to its mRNA. The sequence is that of Large ribosomal subunit protein uL1 from Mycoplasma pneumoniae (strain ATCC 29342 / M129 / Subtype 1) (Mycoplasmoides pneumoniae).